The sequence spans 173 residues: Glutamyl-tRNA(Gln) amidotransferase subunit F, mitochondrial (173 aa).

A mitochondrion-targeting transit peptide spans 1 to 15; that stretch reads MSRFMIRAVFFRRYT.

The protein belongs to the GatF family. As to quaternary structure, subunit of the heterotrimeric GatFAB amidotransferase (AdT) complex, composed of A, B and F subunits.

It is found in the mitochondrion inner membrane. It carries out the reaction L-glutamyl-tRNA(Gln) + L-glutamine + ATP + H2O = L-glutaminyl-tRNA(Gln) + L-glutamate + ADP + phosphate + H(+). In terms of biological role, allows the formation of correctly charged Gln-tRNA(Gln) through the transamidation of misacylated Glu-tRNA(Gln) in the mitochondria. The reaction takes place in the presence of glutamine and ATP through an activated gamma-phospho-Glu-tRNA(Gln). Required for proper protein synthesis within the mitochondrion. The polypeptide is Glutamyl-tRNA(Gln) amidotransferase subunit F, mitochondrial (Candida glabrata (strain ATCC 2001 / BCRC 20586 / JCM 3761 / NBRC 0622 / NRRL Y-65 / CBS 138) (Yeast)).